The primary structure comprises 215 residues: Ras-related protein Rab-5A (215 aa).

The GTP site is built by Ser-29, Ala-30, Gly-32, Lys-33, Ser-34, Ser-35, His-46, Glu-47, Thr-52, and Gly-78. Ser-34 contacts Mg(2+). Short sequence motifs (switch) lie at residues 44-56 (QFHE…IGAA) and 77-93 (AGQE…YRGA). Thr-52 is a Mg(2+) binding site. Ser-84 carries the post-translational modification Phosphoserine. The GTP site is built by Asn-133, Lys-134, Asp-136, Ala-164, and Lys-165. Residues 181-215 (LPKNEPQNPGANSARGRGVDLTEPAQPARSQCCSN) are disordered. 2 S-geranylgeranyl cysteine lipidation sites follow: Cys-212 and Cys-213.

This sequence belongs to the small GTPase superfamily. Rab family. As to quaternary structure, interacts with GDI1; this promotes dissociation from membranes; phosphorylation at Ser-84 disrupts this interaction. Interacts with GDI2; phosphorylation at Ser-84 disrupts the interaction. Interacts with EEA1. Interacts with RIN1 and GAPVD1, which regulate its pathway, probably by acting as a GEF. Interacts with RINL. Interacts with ALS2CL, SUN2, ZFYVE20 and RUFY1. Interacts with RABEP1; one RABEP1 homodimer binds two RAB5A chains, but at opposite sides of the dimer. Interacts with SGSM1 and SGSM3. Interacts with PIK3CB. Interacts with OCRL and INPP5F. May be a component of a complex composed of RAB5A, DYN2 and PIK3C3. Does not interact with BLOC-3 complex (heterodimer of HPS1 and HPS4). Interacts with CLN5. Interacts with APPL2. Interacts with F8A1/F8A2/F8A3. Found in a complex with F8A1/F8A2/F8A3, HTT and RAB5A; mediates the recruitment of HTT by RAB5A onto early endosomes. Interacts with ATP9A. Interacts with PPP1R21; mediates the recruitment of FERRY complex by RAB5A onto early endosomes. The cofactor is Mg(2+). Post-translationally, phosphorylation of Ser-84 in the switch II region by LRRK2 prevents the association of RAB regulatory proteins, including RAB GDP dissociation inhibitors GDI1 and GDI2.

It is found in the cell membrane. The protein localises to the early endosome membrane. It localises to the melanosome. The protein resides in the cytoplasmic vesicle. Its subcellular location is the cell projection. It is found in the ruffle. The protein localises to the membrane. It localises to the cytoplasm. The protein resides in the cytosol. Its subcellular location is the phagosome membrane. It is found in the endosome membrane. The catalysed reaction is GTP + H2O = GDP + phosphate + H(+). Its activity is regulated as follows. Regulated by guanine nucleotide exchange factors (GEFs) including RINL, which promote the exchange of bound GDP for free GTP. Regulated by GTPase activating proteins (GAPs) which increase the GTP hydrolysis activity. Inhibited by GDP dissociation inhibitors (GDIs). The small GTPases Rab are key regulators of intracellular membrane trafficking, from the formation of transport vesicles to their fusion with membranes. Rabs cycle between an inactive GDP-bound form and an active GTP-bound form that is able to recruit to membranes different sets of downstream effectors directly responsible for vesicle formation, movement, tethering and fusion. RAB5A is required for the fusion of plasma membranes and early endosomes. Contributes to the regulation of filopodia extension. Required for the exosomal release of SDCBP, CD63, PDCD6IP and syndecan. Regulates maturation of apoptotic cell-containing phagosomes, probably downstream of DYN2 and PIK3C3. The polypeptide is Ras-related protein Rab-5A (Mus musculus (Mouse)).